An 839-amino-acid chain; its full sequence is Toll-like receptor 4 (839 aa).

The N-terminal stretch at 1-23 (MMSASRLAGTLIPAMAFLSCVRP) is a signal peptide. At 24 to 631 (ESWEPCVEVV…SLNITCQMNK (608 aa)) the chain is on the extracellular side. A disulfide bond links C29 and C40. A glycan (N-linked (GlcNAc...) asparagine) is linked at N35. LRR repeat units lie at residues 55 to 76 (STKN…SFFS), 79 to 100 (ELQV…AYQS), 103 to 124 (HLST…AFSG), 127 to 148 (SLQK…PIGH), and 151 to 172 (TLKE…EYFS). An N-linked (GlcNAc...) asparagine glycan is attached at N173. LRR repeat units lie at residues 176 to 199 (NLEH…RVLH), 205 to 225 (NLSL…AFKE), and 227 to 247 (RLHK…KTCI). The N-linked (GlcNAc...) asparagine glycan is linked to N205. A disulfide bond links C281 and C306. 2 N-linked (GlcNAc...) asparagine glycosylation sites follow: N282 and N309. LRR repeat units lie at residues 331-351 (GWQH…LKLK), 352-373 (SLKR…VDLP), 374-394 (SLEF…CSQS), 400-422 (SLKY…LGLE), 423-444 (QLEH…SVFL), 448-456 (NLIYLDISH), 472-495 (SLEV…FTEL), 497-518 (NLTF…AFNS), 521-542 (SLQV…PYKC), and 545-565 (SLQV…QELQ). A disulfide bridge links C390 with C391. N497 and N526 each carry an N-linked (GlcNAc...) asparagine glycan. Residue N575 is glycosylated (N-linked (GlcNAc...) asparagine). The LRRCT domain maps to 579-629 (NDFACTCEHQSFLQWIKDQRQLLVEVERMECATPSDKQGMPVLSLNITCQM). Cystine bridges form between C583-C609 and C585-C627. N624 and N630 each carry an N-linked (GlcNAc...) asparagine glycan. A helical membrane pass occupies residues 632-652 (TIIGVSVLSVLVVSVVAVLVY). The Cytoplasmic portion of the chain corresponds to 653-839 (KFYFHLMLLA…GCNWQEATSI (187 aa)). A TIR domain is found at 672-815 (NIYDAFVIYS…IFWRRLRKAL (144 aa)).

The protein belongs to the Toll-like receptor family. Belongs to the lipopolysaccharide (LPS) receptor, a multi-protein complex containing at least CD14, LY96 and TLR4. Binding to bacterial LPS leads to homodimerization. Interacts with LY96 via the extracellular domain. Interacts with MYD88. Interacts (via TIR domains) with TIRAP. Interacts with TICAM2. Interacts with NOX4. Interacts with CNPY3. Interacts with HSP90B1. The interaction with both CNPY3 and HSP90B1 is required for proper folding in the endoplasmic reticulum. Interacts with MAP3K21; this interaction leads to negative regulation of TLR4 signaling. Interacts with CD36, following CD36 stimulation by oxLDL or amyloid-beta 42, and forms a heterodimer with TLR6. The trimeric complex is internalized and triggers inflammatory response. LYN kinase activity facilitates TLR4-TLR6 heterodimerization and signal initiation. Interacts with TICAM1 in response to LPS in a WDFY1-dependent manner. Interacts with WDFY1 in response to LPS. Interacts with SMPDL3B. Interacts with CEACAM1; upon lipopolysaccharide stimulation, forms a complex including TLR4 and the phosphorylated form of SYK and CEACAM1, which in turn, recruits PTPN6 that dephosphorylates SYK, reducing the production of reactive oxygen species (ROS) and lysosome disruption, which in turn, reduces the activity of the inflammasome. Interacts with RFTN1; the interaction occurs in response to lipopolysaccharide stimulation. Interacts with SCIMP; the interaction occurs in response to lipopolysaccharide stimulation and is enhanced by phosphorylation of SCIMP by LYN. This interaction facilitates the phosphorylation of TLR4 by LYN which elicits a selective cytokine response in macrophages. Interacts with TRAF3IP3. Interacts with TREM1; this interaction enhances TLR4-mediated inflammatory response. Interacts with ZG16B/PAUF. Interacts with CD82; this interaction inhibits TLR4-mediated signaling pathway. Interacts with neutrophil recruitment protein from Aedes aegypti saliva; the interaction probably promotes activation of canonical NF-kappa-B signaling in skin-resident macrophages and subsequent expression of neutrophil chemoattractants. In terms of assembly, (Microbial infection) In case of infection, interacts with uropathogenic E.coli protein TcpC. As to quaternary structure, (Microbial infection) In case of infection, interacts with B.melitensis protein TcpB; TcpB abolishes the TLR4-TIRAP interaction in vitro. (Microbial infection) Interacts with ebolavirus protein GP; this interaction leads to the production of proinflammatory cytokines and suppressor of cytokine signaling 1/SOCS1. In terms of processing, N-Glycosylation of Asn-526 and Asn-575 by STT3A-containing OST-A complex is necessary for the expression of TLR4 on the cell surface and the LPS-response. Likewise, mutants lacking two or more of the other N-glycosylation sites were deficient in interaction with LPS. Post-translationally, phosphorylated on tyrosine residues by LYN after binding lipopolysaccharide. Ubiquitinated by RNF128 via 'Lys-28'-linked polyubiquitin chains, leading to proteasomal degradation. Highly expressed in placenta, spleen and peripheral blood leukocytes. Detected in monocytes, macrophages, dendritic cells and several types of T-cells. Expressed in pancreatic cancer cells but not in normal pancreatic cells (at protein level).

It localises to the cell membrane. The protein resides in the early endosome. The protein localises to the cell projection. Its subcellular location is the ruffle. Functionally, transmembrane receptor that functions as a pattern recognition receptor recognizing pathogen- and damage-associated molecular patterns (PAMPs and DAMPs) to induce innate immune responses via downstream signaling pathways. At the plasma membrane, cooperates with LY96 to mediate the innate immune response to bacterial lipopolysaccharide (LPS). Also involved in LPS-independent inflammatory responses triggered by free fatty acids, such as palmitate, and Ni(2+). Mechanistically, acts via MYD88, TIRAP and TRAF6, leading to NF-kappa-B activation, cytokine secretion and the inflammatory response. Alternatively, CD14-mediated TLR4 internalization via endocytosis is associated with the initiation of a MYD88-independent signaling via the TICAM1-TBK1-IRF3 axis leading to type I interferon production. In addition to the secretion of proinflammatory cytokines, initiates the activation of NLRP3 inflammasome and formation of a positive feedback loop between autophagy and NF-kappa-B signaling cascade. In complex with TLR6, promotes inflammation in monocytes/macrophages by associating with TLR6 and the receptor CD86. Upon ligand binding, such as oxLDL or amyloid-beta 42, the TLR4:TLR6 complex is internalized and triggers inflammatory response, leading to NF-kappa-B-dependent production of CXCL1, CXCL2 and CCL9 cytokines, via MYD88 signaling pathway, and CCL5 cytokine, via TICAM1 signaling pathway. In myeloid dendritic cells, vesicular stomatitis virus glycoprotein G but not LPS promotes the activation of IRF7, leading to type I IFN production in a CD14-dependent manner. Required for the migration-promoting effects of ZG16B/PAUF on pancreatic cancer cells. This is Toll-like receptor 4 (TLR4) from Homo sapiens (Human).